We begin with the raw amino-acid sequence, 657 residues long: Macrolide export ATP-binding/permease protein MacB (657 aa).

The region spanning 5–242 (LELLDVHRTY…RAVTGESAFD (238 aa)) is the ABC transporter domain. 41 to 48 (GASGSGKS) lines the ATP pocket. Helical transmembrane passes span 276-296 (FLSV…MALG), 538-558 (IAAI…LVSV), 596-616 (IGVF…GWAV), and 620-640 (LLSV…FGLW).

The protein belongs to the ABC transporter superfamily. Macrolide exporter (TC 3.A.1.122) family. Homodimer.

It localises to the cell inner membrane. In terms of biological role, non-canonical ABC transporter that contains transmembrane domains (TMD), which form a pore in the inner membrane, and an ATP-binding domain (NBD), which is responsible for energy generation. Confers resistance against macrolides. This is Macrolide export ATP-binding/permease protein MacB from Chlorobium phaeobacteroides (strain DSM 266 / SMG 266 / 2430).